The sequence spans 129 residues: Small ribosomal subunit protein uS11 (129 aa).

The protein belongs to the universal ribosomal protein uS11 family. Part of the 30S ribosomal subunit. Interacts with proteins S7 and S18. Binds to IF-3.

Its function is as follows. Located on the platform of the 30S subunit, it bridges several disparate RNA helices of the 16S rRNA. Forms part of the Shine-Dalgarno cleft in the 70S ribosome. The polypeptide is Small ribosomal subunit protein uS11 (Pseudomonas fluorescens (strain SBW25)).